Consider the following 72-residue polypeptide: Putative membrane protein insertion efficiency factor (72 aa).

The protein belongs to the UPF0161 family.

Its subcellular location is the cell inner membrane. In terms of biological role, could be involved in insertion of integral membrane proteins into the membrane. The sequence is that of Putative membrane protein insertion efficiency factor from Myxococcus xanthus (strain DK1622).